The primary structure comprises 457 residues: Multidrug resistance protein MdtK (457 aa).

12 helical membrane passes run 11–31, 53–73, 93–113, 127–147, 160–180, 189–209, 243–263, 276–296, 314–334, 357–377, 387–407, and 418–438; these read LLAL…MGFV, IWLP…PVIA, WLAG…GYII, AVGY…FQVA, GMVM…IFIY, GGVG…FSMI, LPIA…ALLV, IALN…AAVT, AART…LFTV, LMLL…GSGI, IFFI…YILA, and PAGF…LMML.

It belongs to the multi antimicrobial extrusion (MATE) (TC 2.A.66.1) family. MdtK subfamily.

It localises to the cell inner membrane. Multidrug efflux pump that functions probably as a Na(+)/drug antiporter. This chain is Multidrug resistance protein MdtK, found in Enterobacter sp. (strain 638).